An 89-amino-acid polypeptide reads, in one-letter code: Small ribosomal subunit protein bS18 (89 aa).

The protein belongs to the bacterial ribosomal protein bS18 family. Part of the 30S ribosomal subunit. Forms a tight heterodimer with protein bS6.

Its function is as follows. Binds as a heterodimer with protein bS6 to the central domain of the 16S rRNA, where it helps stabilize the platform of the 30S subunit. This Treponema denticola (strain ATCC 35405 / DSM 14222 / CIP 103919 / JCM 8153 / KCTC 15104) protein is Small ribosomal subunit protein bS18.